The primary structure comprises 210 residues: Protein GrpE (210 aa).

Residues 1–12 (MSDQAKDERAPS) show a composition bias toward basic and acidic residues. Disordered stretches follow at residues 1–26 (MSDQ…RTEG) and 191–210 (IAAE…EKDA).

Belongs to the GrpE family. As to quaternary structure, homodimer.

The protein localises to the cytoplasm. Its function is as follows. Participates actively in the response to hyperosmotic and heat shock by preventing the aggregation of stress-denatured proteins, in association with DnaK and GrpE. It is the nucleotide exchange factor for DnaK and may function as a thermosensor. Unfolded proteins bind initially to DnaJ; upon interaction with the DnaJ-bound protein, DnaK hydrolyzes its bound ATP, resulting in the formation of a stable complex. GrpE releases ADP from DnaK; ATP binding to DnaK triggers the release of the substrate protein, thus completing the reaction cycle. Several rounds of ATP-dependent interactions between DnaJ, DnaK and GrpE are required for fully efficient folding. The sequence is that of Protein GrpE from Mesorhizobium japonicum (strain LMG 29417 / CECT 9101 / MAFF 303099) (Mesorhizobium loti (strain MAFF 303099)).